The following is a 190-amino-acid chain: Cell division protein SepF (190 aa).

Belongs to the SepF family. As to quaternary structure, homodimer. Interacts with FtsZ.

It localises to the cytoplasm. Cell division protein that is part of the divisome complex and is recruited early to the Z-ring. Probably stimulates Z-ring formation, perhaps through the cross-linking of FtsZ protofilaments. Its function overlaps with FtsA. The chain is Cell division protein SepF from Synechococcus sp. (strain WH7803).